The chain runs to 881 residues: Alanine--tRNA ligase (881 aa).

4 residues coordinate Zn(2+): His-565, His-569, Cys-672, and His-676.

Belongs to the class-II aminoacyl-tRNA synthetase family. The cofactor is Zn(2+).

The protein localises to the cytoplasm. It carries out the reaction tRNA(Ala) + L-alanine + ATP = L-alanyl-tRNA(Ala) + AMP + diphosphate. Functionally, catalyzes the attachment of alanine to tRNA(Ala) in a two-step reaction: alanine is first activated by ATP to form Ala-AMP and then transferred to the acceptor end of tRNA(Ala). Also edits incorrectly charged Ser-tRNA(Ala) and Gly-tRNA(Ala) via its editing domain. This Novosphingobium aromaticivorans (strain ATCC 700278 / DSM 12444 / CCUG 56034 / CIP 105152 / NBRC 16084 / F199) protein is Alanine--tRNA ligase.